We begin with the raw amino-acid sequence, 318 residues long: NADH-ubiquinone oxidoreductase chain 1 (318 aa).

8 helical membrane-spanning segments follow: residues 5–25 (IISSFLTFVMILIAVAFLTLI), 69–89 (SIFLFILAPALAISLALILWI), 102–122 (LGLMFILAISSLSVYSLLTSG), 148–168 (LGLMIVALTILSGGFDLKLFI), 174–194 (IWLLFPMWPIFLMWFISTLAE), 215–235 (VEFSGGLFALFFLAEYANILF), 253–273 (LYFSASMTMKTMFLIFLFLWV), and 293–313 (FLPITLSLLIFQFSMSLFFGV).

The protein belongs to the complex I subunit 1 family.

The protein resides in the mitochondrion inner membrane. The catalysed reaction is a ubiquinone + NADH + 5 H(+)(in) = a ubiquinol + NAD(+) + 4 H(+)(out). Functionally, core subunit of the mitochondrial membrane respiratory chain NADH dehydrogenase (Complex I) that is believed to belong to the minimal assembly required for catalysis. Complex I functions in the transfer of electrons from NADH to the respiratory chain. The immediate electron acceptor for the enzyme is believed to be ubiquinone. The polypeptide is NADH-ubiquinone oxidoreductase chain 1 (MT-ND1) (Myxine glutinosa (Atlantic hagfish)).